Consider the following 138-residue polypeptide: Acidic phospholipase A2 1 (138 aa).

The first 16 residues, 1-16 (MRTLWIVAVWLMGVEG), serve as a signal peptide directing secretion. Intrachain disulfides connect C42–C131, C44–C60, C59–C111, C65–C138, C66–C104, C73–C97, and C91–C102. Ca(2+) is bound by residues Y43, G45, and G47. Residue H63 is part of the active site. D64 serves as a coordination point for Ca(2+). Residue D105 is part of the active site.

Monomer. The cofactor is Ca(2+). Expressed by the venom gland.

Its subcellular location is the secreted. It catalyses the reaction a 1,2-diacyl-sn-glycero-3-phosphocholine + H2O = a 1-acyl-sn-glycero-3-phosphocholine + a fatty acid + H(+). Snake venom phospholipase that inhibits ADP- and collagen-induced human platelet aggregation. This inhibition is completely inhibited by abolition of catalytic activity in case of collagen as inducer and partially inhibited in case of ADP as inducer. PLA2 catalyzes the calcium-dependent hydrolysis of the 2-acyl groups in 3-sn-phosphoglycerides. The protein is Acidic phospholipase A2 1 of Macrovipera lebetinus (Levantine viper).